The primary structure comprises 83 residues: Beta-toxin Ct25 (83 aa).

Positions 1–18 (MKVLILIIASVLLIGVEC) are cleaved as a signal peptide. One can recognise an LCN-type CS-alpha/beta domain in the interval 19-81 (KDGYPKNSEG…VWDSATNKCG (63 aa)). 4 disulfides stabilise this stretch: cysteine 29/cysteine 80, cysteine 33/cysteine 54, cysteine 40/cysteine 61, and cysteine 44/cysteine 63. At glycine 81 the chain carries Glycine amide.

Belongs to the long (4 C-C) scorpion toxin superfamily. Sodium channel inhibitor family. Beta subfamily. As to expression, expressed by the venom gland.

The protein localises to the secreted. Functionally, beta toxins bind voltage-independently at site-4 of sodium channels (Nav) and shift the voltage of activation toward more negative potentials thereby affecting sodium channel activation and promoting spontaneous and repetitive firing. The chain is Beta-toxin Ct25 from Centruroides tecomanus (Scorpion).